The sequence spans 727 residues: Pre-B-cell leukemia transcription factor-interacting protein 1 (727 aa).

The span at 1–10 (MASCPDSDNS) shows a compositional bias: polar residues. Residues 1-135 (MASCPDSDNS…SPHRSLPSSP (135 aa)) form a disordered region. Residues 39–53 (RAPQSPSRAAAEESA) are compositionally biased toward low complexity. Serine 43 carries the phosphoserine modification. A compositionally biased stretch (polar residues) spans 61–70 (TVSQNESSKS). Phosphoserine occurs at positions 130, 134, 147, 148, and 149. Threonine 153 bears the Phosphothreonine mark. 2 coiled-coil regions span residues 269–353 (QNMA…QGAD) and 380–421 (SPGF…SLKE). Residues 488–506 (WKTEHWKHKKEASGREKSW) carry the Nuclear localization signal motif. Disordered stretches follow at residues 491–568 (EHWK…AKDR) and 701–727 (KRSG…HRQG). Composition is skewed to basic and acidic residues over residues 498–544 (EASG…EPPR), 551–568 (PSGE…AKDR), and 716–727 (GPREEHSPHRQG). A Nuclear localization signal motif is present at residues 696-719 (DKALKKRSGKKDKHLQNRVVGPRE).

In terms of assembly, interacts with ESR1, PBX1, PBX2 and PBX3. Interacts with TEX11.

It is found in the cytoplasm. It localises to the cytoskeleton. The protein localises to the nucleus. Functionally, regulator of pre-B-cell leukemia transcription factors (BPXs) function. Inhibits the binding of PBX1-HOX complex to DNA and blocks the transcriptional activity of E2A-PBX1. Tethers estrogen receptor-alpha (ESR1) to microtubules and allows them to influence estrogen receptors-alpha signaling. The protein is Pre-B-cell leukemia transcription factor-interacting protein 1 (PBXIP1) of Bos taurus (Bovine).